The chain runs to 985 residues: Bifunctional glutamine synthetase adenylyltransferase/adenylyl-removing enzyme (985 aa).

Residues 1 to 472 (MTSSAPGNAD…HYARLFEGDP (472 aa)) are adenylyl removase. The segment at 477–985 (SLPPVNYGAG…RRVFTSLLEE (509 aa)) is adenylyl transferase.

The protein belongs to the GlnE family. Requires Mg(2+) as cofactor.

The catalysed reaction is [glutamine synthetase]-O(4)-(5'-adenylyl)-L-tyrosine + phosphate = [glutamine synthetase]-L-tyrosine + ADP. It carries out the reaction [glutamine synthetase]-L-tyrosine + ATP = [glutamine synthetase]-O(4)-(5'-adenylyl)-L-tyrosine + diphosphate. Functionally, involved in the regulation of glutamine synthetase GlnA, a key enzyme in the process to assimilate ammonia. When cellular nitrogen levels are high, the C-terminal adenylyl transferase (AT) inactivates GlnA by covalent transfer of an adenylyl group from ATP to specific tyrosine residue of GlnA, thus reducing its activity. Conversely, when nitrogen levels are low, the N-terminal adenylyl removase (AR) activates GlnA by removing the adenylyl group by phosphorolysis, increasing its activity. The regulatory region of GlnE binds the signal transduction protein PII (GlnB) which indicates the nitrogen status of the cell. This chain is Bifunctional glutamine synthetase adenylyltransferase/adenylyl-removing enzyme, found in Bradyrhizobium sp. (strain BTAi1 / ATCC BAA-1182).